The chain runs to 581 residues: Arginine--tRNA ligase (581 aa).

The short motif at 126–136 is the 'HIGH' region element; that stretch reads PNLAKEMHVGH.

This sequence belongs to the class-I aminoacyl-tRNA synthetase family. In terms of assembly, monomer.

It is found in the cytoplasm. It carries out the reaction tRNA(Arg) + L-arginine + ATP = L-arginyl-tRNA(Arg) + AMP + diphosphate. This chain is Arginine--tRNA ligase, found in Shewanella halifaxensis (strain HAW-EB4).